The sequence spans 89 residues: MKTLLLSLVVVIIVCLDLGYTMQCKTCSFYTCPNSETCPDGKNICVKRSWTAVRGDGPKREIRRECAATCPPSKLGLTVFCCTTDNCYH.

An N-terminal signal peptide occupies residues 1 to 21; it reads MKTLLLSLVVVIIVCLDLGYT. 5 disulfides stabilise this stretch: Cys-24/Cys-45, Cys-27/Cys-32, Cys-38/Cys-66, Cys-70/Cys-81, and Cys-82/Cys-87. The Cell attachment site motif lies at 54-56; the sequence is RGD.

This sequence belongs to the three-finger toxin family. Ancestral subfamily. Orphan group V sub-subfamily. Expressed by the venom gland.

It is found in the secreted. Exhibits M2 muscarinic acetylcholine receptor (CHRM2)-blocking activity, but has a weak binding activity toward nicotinic AChR. Moreover, it inhibits collagen-induced platelet aggregation. The sequence is that of Long neurotoxin homolog NTL2 from Bungarus multicinctus (Many-banded krait).